A 931-amino-acid polypeptide reads, in one-letter code: Protocadherin gamma-A1 (931 aa).

The signal sequence occupies residues methionine 1 to alanine 28. Cadherin domains follow at residues glycine 29 to phenylalanine 133, glutamine 134 to phenylalanine 242, threonine 243 to valine 347, threonine 348 to phenylalanine 452, histidine 453 to isoleucine 562, and aspartate 570 to alanine 682. Residues glycine 29–tyrosine 692 lie on the Extracellular side of the membrane. Asparagine 265, asparagine 419, and asparagine 545 each carry an N-linked (GlcNAc...) asparagine glycan. An N-linked (GlcNAc...) asparagine glycan is attached at asparagine 685. A helical transmembrane segment spans residues leucine 693–alanine 713. Topologically, residues histidine 714–lysine 931 are cytoplasmic. 2 disordered regions span residues lysine 801–asparagine 840 and alanine 901–lysine 931. Polar residues predominate over residues phenylalanine 805 to asparagine 840. The span at asparagine 921–lysine 931 shows a compositional bias: basic residues.

Its subcellular location is the cell membrane. Functionally, potential calcium-dependent cell-adhesion protein. May be involved in the establishment and maintenance of specific neuronal connections in the brain. The sequence is that of Protocadherin gamma-A1 (PCDHGA1) from Homo sapiens (Human).